A 525-amino-acid chain; its full sequence is Bifunctional purine biosynthesis protein PurH (525 aa).

One can recognise an MGS-like domain in the interval 1 to 149 (MSDPVIKRAL…KNNESVTVVT (149 aa)).

The protein belongs to the PurH family.

The catalysed reaction is (6R)-10-formyltetrahydrofolate + 5-amino-1-(5-phospho-beta-D-ribosyl)imidazole-4-carboxamide = 5-formamido-1-(5-phospho-D-ribosyl)imidazole-4-carboxamide + (6S)-5,6,7,8-tetrahydrofolate. The enzyme catalyses IMP + H2O = 5-formamido-1-(5-phospho-D-ribosyl)imidazole-4-carboxamide. Its pathway is purine metabolism; IMP biosynthesis via de novo pathway; 5-formamido-1-(5-phospho-D-ribosyl)imidazole-4-carboxamide from 5-amino-1-(5-phospho-D-ribosyl)imidazole-4-carboxamide (10-formyl THF route): step 1/1. The protein operates within purine metabolism; IMP biosynthesis via de novo pathway; IMP from 5-formamido-1-(5-phospho-D-ribosyl)imidazole-4-carboxamide: step 1/1. This Pelodictyon phaeoclathratiforme (strain DSM 5477 / BU-1) protein is Bifunctional purine biosynthesis protein PurH.